The primary structure comprises 374 residues: PqqA peptide cyclase (374 aa).

In terms of domain architecture, Radical SAM core spans 4–224; it reads IEPPMGLLAE…ERLKGVMVID (221 aa). 3 residues coordinate [4Fe-4S] cluster: Cys-18, Cys-22, and Cys-25.

The protein belongs to the radical SAM superfamily. PqqE family. Interacts with PqqD. The interaction is necessary for activity of PqqE. [4Fe-4S] cluster is required as a cofactor.

The enzyme catalyses [PQQ precursor protein] + S-adenosyl-L-methionine = E-Y cross-linked-[PQQ precursor protein] + 5'-deoxyadenosine + L-methionine + H(+). Its pathway is cofactor biosynthesis; pyrroloquinoline quinone biosynthesis. Its function is as follows. Catalyzes the cross-linking of a glutamate residue and a tyrosine residue in the PqqA protein as part of the biosynthesis of pyrroloquinoline quinone (PQQ). In Granulibacter bethesdensis (strain ATCC BAA-1260 / CGDNIH1), this protein is PqqA peptide cyclase.